The primary structure comprises 105 residues: Putative toxin MazF8 (105 aa).

In terms of assembly, forms a complex with cognate antitoxin MazE8.

Putative toxic component of a type II toxin-antitoxin (TA) system. Acts as an endoribonuclease. Neutralized by coexpression with cognate antitoxin MazE8. This chain is Putative toxin MazF8 (mazF8), found in Mycobacterium tuberculosis (strain CDC 1551 / Oshkosh).